A 212-amino-acid polypeptide reads, in one-letter code: Thiamine-phosphate synthase (212 aa).

4-amino-2-methyl-5-(diphosphooxymethyl)pyrimidine contacts are provided by residues 39–43 and N71; that span reads QLRIK. Mg(2+)-binding residues include D72 and D91. Residue S110 participates in 4-amino-2-methyl-5-(diphosphooxymethyl)pyrimidine binding. 136–138 contributes to the 2-[(2R,5Z)-2-carboxy-4-methylthiazol-5(2H)-ylidene]ethyl phosphate binding site; it reads TQT. 4-amino-2-methyl-5-(diphosphooxymethyl)pyrimidine is bound at residue K139. Residues G168 and 188–189 contribute to the 2-[(2R,5Z)-2-carboxy-4-methylthiazol-5(2H)-ylidene]ethyl phosphate site; that span reads VS.

The protein belongs to the thiamine-phosphate synthase family. Mg(2+) serves as cofactor.

The enzyme catalyses 2-[(2R,5Z)-2-carboxy-4-methylthiazol-5(2H)-ylidene]ethyl phosphate + 4-amino-2-methyl-5-(diphosphooxymethyl)pyrimidine + 2 H(+) = thiamine phosphate + CO2 + diphosphate. The catalysed reaction is 2-(2-carboxy-4-methylthiazol-5-yl)ethyl phosphate + 4-amino-2-methyl-5-(diphosphooxymethyl)pyrimidine + 2 H(+) = thiamine phosphate + CO2 + diphosphate. It carries out the reaction 4-methyl-5-(2-phosphooxyethyl)-thiazole + 4-amino-2-methyl-5-(diphosphooxymethyl)pyrimidine + H(+) = thiamine phosphate + diphosphate. Its pathway is cofactor biosynthesis; thiamine diphosphate biosynthesis; thiamine phosphate from 4-amino-2-methyl-5-diphosphomethylpyrimidine and 4-methyl-5-(2-phosphoethyl)-thiazole: step 1/1. Functionally, condenses 4-methyl-5-(beta-hydroxyethyl)thiazole monophosphate (THZ-P) and 2-methyl-4-amino-5-hydroxymethyl pyrimidine pyrophosphate (HMP-PP) to form thiamine monophosphate (TMP). The chain is Thiamine-phosphate synthase from Serratia proteamaculans (strain 568).